The primary structure comprises 424 residues: Endoglucanase (424 aa).

Residues 1–19 (MHRCMPLVAASMAALMLAG) form the signal peptide. A lipid anchor (N-palmitoyl cysteine) is attached at Cys-20. Cys-20 carries S-diacylglycerol cysteine lipidation. A propeptide spanning residues 20-43 (CGGGDGDTTLSTAAATDTTTLKTA) is cleaved from the precursor. The Proton donor role is filled by Glu-247. Glu-359 serves as the catalytic Nucleophile.

This sequence belongs to the glycosyl hydrolase 5 (cellulase A) family.

The protein resides in the cell membrane. It catalyses the reaction Endohydrolysis of (1-&gt;4)-beta-D-glucosidic linkages in cellulose, lichenin and cereal beta-D-glucans.. In Ralstonia nicotianae (strain ATCC BAA-1114 / GMI1000) (Ralstonia solanacearum), this protein is Endoglucanase (egl).